We begin with the raw amino-acid sequence, 50 residues long: uncharacterized protein (50 aa).

This is an uncharacterized protein from Rickettsia prowazekii (strain Madrid E).